A 130-amino-acid polypeptide reads, in one-letter code: Fluoride-specific ion channel FluC (130 aa).

4 helical membrane passes run 1 to 21 (MGEI…RYGL), 36 to 56 (GTLI…QWGF), 65 to 85 (LKLM…TFSY), and 103 to 123 (ILAN…LGSL). Na(+) contacts are provided by G75 and T78.

This sequence belongs to the fluoride channel Fluc/FEX (TC 1.A.43) family.

The protein resides in the cell membrane. The catalysed reaction is fluoride(in) = fluoride(out). Its activity is regulated as follows. Na(+) is not transported, but it plays an essential structural role and its presence is essential for fluoride channel function. Functionally, fluoride-specific ion channel. Important for reducing fluoride concentration in the cell, thus reducing its toxicity. This chain is Fluoride-specific ion channel FluC, found in Dehalococcoides mccartyi (strain ATCC BAA-2266 / KCTC 15142 / 195) (Dehalococcoides ethenogenes (strain 195)).